The chain runs to 872 residues: Protein translocase subunit SecA (872 aa).

Residues glutamine 87, 105–109 (GEGKT), and aspartate 500 each bind ATP. 4 residues coordinate Zn(2+): cysteine 855, cysteine 857, cysteine 866, and histidine 867.

Belongs to the SecA family. As to quaternary structure, monomer and homodimer. Part of the essential Sec protein translocation apparatus which comprises SecA, SecYEG and auxiliary proteins SecDF-YajC and YidC. Zn(2+) serves as cofactor.

Its subcellular location is the cell inner membrane. The protein resides in the cytoplasm. It catalyses the reaction ATP + H2O + cellular proteinSide 1 = ADP + phosphate + cellular proteinSide 2.. Part of the Sec protein translocase complex. Interacts with the SecYEG preprotein conducting channel. Has a central role in coupling the hydrolysis of ATP to the transfer of proteins into and across the cell membrane, serving both as a receptor for the preprotein-SecB complex and as an ATP-driven molecular motor driving the stepwise translocation of polypeptide chains across the membrane. In Anaplasma marginale (strain St. Maries), this protein is Protein translocase subunit SecA.